A 242-amino-acid polypeptide reads, in one-letter code: Small ribosomal subunit protein uS2 (242 aa).

The protein belongs to the universal ribosomal protein uS2 family.

The polypeptide is Small ribosomal subunit protein uS2 (Idiomarina loihiensis (strain ATCC BAA-735 / DSM 15497 / L2-TR)).